Consider the following 320-residue polypeptide: MEHFLKSIFDISKNVLPIILFIELIIGIIGNGFMALVHCMDWVKRKKMSLVNQILTTLATSRICLLWFMLLGLLITLLDPDLASARMMIQVASNLWIIANHMSIWLATCLTVFYFLKIANFSSSLFLYLKWRVEKVISVIFLVSLVLLFLNMLLMNLENDMCIAEYHQINISYSFIYHYRADCERRVLRLHIIILSVPFVLSLPTFLLLIFSLWTHHKKMQQHVQGRRDASTTAHFKALQTVIAFLLLYCIFILSMLLQFWKYELMKKPLFILFCHIVYGAFPSFHSYVLILGDMKLRQASLSVLLWLKCRPNYIETLDL.

At 1–14 (MEHFLKSIFDISKN) the chain is on the extracellular side. Residues 15–35 (VLPIILFIELIIGIIGNGFMA) form a helical membrane-spanning segment. Residues 36–62 (LVHCMDWVKRKKMSLVNQILTTLATSR) lie on the Cytoplasmic side of the membrane. The chain crosses the membrane as a helical span at residues 63–83 (ICLLWFMLLGLLITLLDPDLA). At 84 to 94 (SARMMIQVASN) the chain is on the extracellular side. A helical membrane pass occupies residues 95–115 (LWIIANHMSIWLATCLTVFYF). At 116-135 (LKIANFSSSLFLYLKWRVEK) the chain is on the cytoplasmic side. The helical transmembrane segment at 136–156 (VISVIFLVSLVLLFLNMLLMN) threads the bilayer. At 157–191 (LENDMCIAEYHQINISYSFIYHYRADCERRVLRLH) the chain is on the extracellular side. N170 is a glycosylation site (N-linked (GlcNAc...) asparagine). A helical transmembrane segment spans residues 192–212 (IIILSVPFVLSLPTFLLLIFS). Over 213-240 (LWTHHKKMQQHVQGRRDASTTAHFKALQ) the chain is Cytoplasmic. A helical transmembrane segment spans residues 241 to 261 (TVIAFLLLYCIFILSMLLQFW). The Extracellular portion of the chain corresponds to 262-270 (KYELMKKPL). The chain crosses the membrane as a helical span at residues 271-291 (FILFCHIVYGAFPSFHSYVLI). Topologically, residues 292–320 (LGDMKLRQASLSVLLWLKCRPNYIETLDL) are cytoplasmic.

Belongs to the G-protein coupled receptor T2R family.

It is found in the membrane. In terms of biological role, putative taste receptor which may play a role in the perception of bitterness. In Rattus norvegicus (Rat), this protein is Taste receptor type 2 member 109.